The following is a 144-amino-acid chain: Small ribosomal subunit protein uS19 (144 aa).

The protein belongs to the universal ribosomal protein uS19 family.

Functionally, protein S19 forms a complex with S13 that binds strongly to the 16S ribosomal RNA. The polypeptide is Small ribosomal subunit protein uS19 (Hyperthermus butylicus (strain DSM 5456 / JCM 9403 / PLM1-5)).